The following is a 201-amino-acid chain: Small ribosomal subunit protein uS4 (201 aa).

The tract at residues 26–45 (FEKRNYPPGQHGNNRRRGKK) is disordered. The S4 RNA-binding domain occupies 93–153 (SRLDNVVYRM…EKSKSLAVVQ (61 aa)).

The protein belongs to the universal ribosomal protein uS4 family. Part of the 30S ribosomal subunit. Contacts protein S5. The interaction surface between S4 and S5 is involved in control of translational fidelity.

In terms of biological role, one of the primary rRNA binding proteins, it binds directly to 16S rRNA where it nucleates assembly of the body of the 30S subunit. Its function is as follows. With S5 and S12 plays an important role in translational accuracy. This chain is Small ribosomal subunit protein uS4, found in Christiangramia forsetii (strain DSM 17595 / CGMCC 1.15422 / KT0803) (Gramella forsetii).